Consider the following 360-residue polypeptide: S-adenosylmethionine decarboxylase proenzyme (360 aa).

Residues Glu13 and Glu16 contribute to the active site. The active-site Schiff-base intermediate with substrate; via pyruvic acid is Ser73. A Pyruvic acid (Ser); by autocatalysis modification is found at Ser73. Cys87 serves as the catalytic Proton donor; for catalytic activity. Residues Ser236 and His249 each act as proton acceptor; for processing activity in the active site.

It belongs to the eukaryotic AdoMetDC family. Requires pyruvate as cofactor. Post-translationally, is synthesized initially as an inactive proenzyme. Formation of the active enzyme involves a self-maturation process in which the active site pyruvoyl group is generated from an internal serine residue via an autocatalytic post-translational modification. Two non-identical subunits are generated from the proenzyme in this reaction, and the pyruvate is formed at the N-terminus of the alpha chain, which is derived from the carboxyl end of the proenzyme. The post-translation cleavage follows an unusual pathway, termed non-hydrolytic serinolysis, in which the side chain hydroxyl group of the serine supplies its oxygen atom to form the C-terminus of the beta chain, while the remainder of the serine residue undergoes an oxidative deamination to produce ammonia and the pyruvoyl group blocking the N-terminus of the alpha chain. In terms of tissue distribution, stolon, also expressed in leaves, stems and roots.

The catalysed reaction is S-adenosyl-L-methionine + H(+) = S-adenosyl 3-(methylsulfanyl)propylamine + CO2. It functions in the pathway amine and polyamine biosynthesis; S-adenosylmethioninamine biosynthesis; S-adenosylmethioninamine from S-adenosyl-L-methionine: step 1/1. This Solanum tuberosum (Potato) protein is S-adenosylmethionine decarboxylase proenzyme (SAMDC).